The sequence spans 136 residues: DNA-directed RNA polymerase subunit omega (136 aa).

Residues 79-107 (EPEAETVPLLSSSPAAAAVAPQSSSDDAA) are disordered. Positions 89–107 (SSSPAAAAVAPQSSSDDAA) are enriched in low complexity.

Belongs to the RNA polymerase subunit omega family. The RNAP catalytic core consists of 2 alpha, 1 beta, 1 beta' and 1 omega subunit. When a sigma factor is associated with the core the holoenzyme is formed, which can initiate transcription.

The catalysed reaction is RNA(n) + a ribonucleoside 5'-triphosphate = RNA(n+1) + diphosphate. Its function is as follows. Promotes RNA polymerase assembly. Latches the N- and C-terminal regions of the beta' subunit thereby facilitating its interaction with the beta and alpha subunits. This chain is DNA-directed RNA polymerase subunit omega, found in Methylobacterium radiotolerans (strain ATCC 27329 / DSM 1819 / JCM 2831 / NBRC 15690 / NCIMB 10815 / 0-1).